The sequence spans 185 residues: Male-enhanced antigen 1 (185 aa).

Disordered stretches follow at residues 1–90 (MGPE…VGDG) and 104–134 (GLHLPDPPLESEDEDEEGATALNNHSSIPMD). Acidic residues-rich tracts occupy residues 50–60 (SSEEPEEEQEE) and 112–121 (LESEDEDEEG). S114 bears the Phosphoserine mark.

Highly expressed in testis.

In terms of biological role, may play an important role in spermatogenesis and/or testis development. The sequence is that of Male-enhanced antigen 1 (MEA1) from Homo sapiens (Human).